Here is a 190-residue protein sequence, read N- to C-terminus: Glutathione peroxidase 2 (190 aa).

Sec-40 is an active-site residue. Position 40 (Sec-40) is a non-standard amino acid, selenocysteine.

The protein belongs to the glutathione peroxidase family. As to quaternary structure, homotetramer. Mucosal epithelium of the gastrointestinal tract.

Its subcellular location is the cytoplasm. The protein resides in the cytosol. The catalysed reaction is 2 glutathione + H2O2 = glutathione disulfide + 2 H2O. It catalyses the reaction a hydroperoxy polyunsaturated fatty acid + 2 glutathione = a hydroxy polyunsaturated fatty acid + glutathione disulfide + H2O. The enzyme catalyses tert-butyl hydroperoxide + 2 glutathione = tert-butanol + glutathione disulfide + H2O. It carries out the reaction cumene hydroperoxide + 2 glutathione = 2-phenylpropan-2-ol + glutathione disulfide + H2O. The catalysed reaction is (13S)-hydroperoxy-(9Z,11E)-octadecadienoate + 2 glutathione = (13S)-hydroxy-(9Z,11E)-octadecadienoate + glutathione disulfide + H2O. It catalyses the reaction (5S)-hydroperoxy-(6E,8Z,11Z,14Z)-eicosatetraenoate + 2 glutathione = (5S)-hydroxy-(6E,8Z,11Z,14Z)-eicosatetraenoate + glutathione disulfide + H2O. The enzyme catalyses (12R)-hydroperoxy-(5Z,8Z,10E,14Z)-eicosatetraenoate + 2 glutathione = (12R)-hydroxy-(5Z,8Z,10E,14Z)-eicosatetraenoate + glutathione disulfide + H2O. It carries out the reaction (15S)-hydroperoxy-(5Z,8Z,11Z,13E)-eicosatetraenoate + 2 glutathione = (15S)-hydroxy-(5Z,8Z,11Z,13E)-eicosatetraenoate + glutathione disulfide + H2O. In terms of biological role, catalyzes the reduction of hydroperoxides in a glutathione-dependent manner thus regulating cellular redox homeostasis. Can reduce small soluble hydroperoxide such as H2O2. Can reduce cumene hydroperoxide and tert-butyl hydroperoxide, as well as several fatty acid-derived hydroperoxides. Cannot reduce phosphatidycholine hydroperoxide. The sequence is that of Glutathione peroxidase 2 (Gpx2) from Rattus norvegicus (Rat).